A 197-amino-acid chain; its full sequence is ATP-dependent Clp protease proteolytic subunit 2 (197 aa).

The active-site Nucleophile is Ser-97. The active site involves His-122.

The protein belongs to the peptidase S14 family. In terms of assembly, fourteen ClpP subunits assemble into 2 heptameric rings which stack back to back to give a disk-like structure with a central cavity, resembling the structure of eukaryotic proteasomes.

The protein localises to the cytoplasm. The catalysed reaction is Hydrolysis of proteins to small peptides in the presence of ATP and magnesium. alpha-casein is the usual test substrate. In the absence of ATP, only oligopeptides shorter than five residues are hydrolyzed (such as succinyl-Leu-Tyr-|-NHMec, and Leu-Tyr-Leu-|-Tyr-Trp, in which cleavage of the -Tyr-|-Leu- and -Tyr-|-Trp bonds also occurs).. Its function is as follows. Cleaves peptides in various proteins in a process that requires ATP hydrolysis. Has a chymotrypsin-like activity. Plays a major role in the degradation of misfolded proteins. The chain is ATP-dependent Clp protease proteolytic subunit 2 from Leptospira interrogans serogroup Icterohaemorrhagiae serovar copenhageni (strain Fiocruz L1-130).